Here is a 103-residue protein sequence, read N- to C-terminus: Ig kappa-b4 chain C region (103 aa).

The region spanning 5 to 95 is the Ig-like domain; sequence PTVLIFPPAA…KVTQGTTSVV (91 aa). Residues Cys26 and Cys85 are joined by a disulfide bond.

This Oryctolagus cuniculus (Rabbit) protein is Ig kappa-b4 chain C region.